The sequence spans 325 residues: Pyruvate dehydrogenase E1 component subunit beta (325 aa).

Glu59 is a binding site for thiamine diphosphate.

Heterodimer of an alpha and a beta chain. It depends on thiamine diphosphate as a cofactor.

The enzyme catalyses N(6)-[(R)-lipoyl]-L-lysyl-[protein] + pyruvate + H(+) = N(6)-[(R)-S(8)-acetyldihydrolipoyl]-L-lysyl-[protein] + CO2. Functionally, the pyruvate dehydrogenase complex catalyzes the overall conversion of pyruvate to acetyl-CoA and CO(2). It contains multiple copies of three enzymatic components: pyruvate dehydrogenase (E1), dihydrolipoamide acetyltransferase (E2) and lipoamide dehydrogenase (E3). In Rickettsia bellii (strain RML369-C), this protein is Pyruvate dehydrogenase E1 component subunit beta (pdhB).